A 1225-amino-acid polypeptide reads, in one-letter code: Mediator of RNA polymerase II transcription subunit 13 (1225 aa).

Belongs to the Mediator complex subunit 13 family. In terms of assembly, component of the srb8-11 complex which consists of rb8, srb9(TRAP240), srb10 and srb11. The srb8-11 complex associates with the Mediator complex thereby blocking association with RNA polymerase II and leading to reduced transcriptional activation by Mediator.

The protein localises to the nucleus. Component of the srb8-11 complex. The srb8-11 complex is a regulatory module of the Mediator complex which is itself involved in regulation of basal and activated RNA polymerase II-dependent transcription. The srb8-11 complex may be involved in the transcriptional repression of a subset of genes regulated by Mediator. It may inhibit the association of the Mediator complex with RNA polymerase II to form the holoenzyme complex. The polypeptide is Mediator of RNA polymerase II transcription subunit 13 (srb9) (Schizosaccharomyces pombe (strain 972 / ATCC 24843) (Fission yeast)).